The sequence spans 511 residues: RNA-splicing ligase RtcB homolog (511 aa).

Residues D125, C128, H233, H265, and H359 each coordinate Mn(2+). 232–236 (NHYAE) is a binding site for GMP. Residues 359-360 (HN), 408-411 (GGTM), S415, 434-437 (HGAG), and K510 contribute to the GMP site. The active-site GMP-histidine intermediate is H434.

The protein belongs to the RtcB family. In terms of assembly, catalytic component of the tRNA-splicing ligase complex. It depends on Mn(2+) as a cofactor.

It carries out the reaction a 3'-end 3'-phospho-ribonucleotide-RNA + a 5'-end dephospho-ribonucleoside-RNA + GTP = a ribonucleotidyl-ribonucleotide-RNA + GMP + diphosphate. The enzyme catalyses a 3'-end 2',3'-cyclophospho-ribonucleotide-RNA + a 5'-end dephospho-ribonucleoside-RNA + GTP + H2O = a ribonucleotidyl-ribonucleotide-RNA + GMP + diphosphate + H(+). Functionally, catalytic subunit of the tRNA-splicing ligase complex that acts by directly joining spliced tRNA halves to mature-sized tRNAs by incorporating the precursor-derived splice junction phosphate into the mature tRNA as a canonical 3',5'-phosphodiester. May act as an RNA ligase with broad substrate specificity, and may function toward other RNAs. In Plasmodium knowlesi (strain H), this protein is RNA-splicing ligase RtcB homolog.